Consider the following 328-residue polypeptide: Radiation response metalloprotease IrrE (328 aa).

The interval 1–31 (MPSANVSPPCPSGVRGGGMGPKAKAEASKPH) is disordered. His-118 provides a ligand contact to Zn(2+). Glu-119 is a catalytic residue. The Zn(2+) site is built by His-122 and Glu-149. Disordered regions lie at residues 217–238 (PREQ…LTVR) and 309–328 (RLGR…DAAQ).

Its function is as follows. Plays a central regulatory role in DNA repair and protection pathways in response to radiation stress. Acts as a site-specific metalloprotease that cleaves and inactivates the repressor protein DdrO, resulting in induced expression of genes required for DNA repair and cell survival after exposure to radiation. Regulates the expression of dozens of proteins from different pathways, including the important DNA repair proteins RecA and PprA. Binds to the promoters of recA and pprA. The chain is Radiation response metalloprotease IrrE from Deinococcus radiodurans (strain ATCC 13939 / DSM 20539 / JCM 16871 / CCUG 27074 / LMG 4051 / NBRC 15346 / NCIMB 9279 / VKM B-1422 / R1).